Here is an 869-residue protein sequence, read N- to C-terminus: Dynamin-3 (869 aa).

In terms of domain architecture, Dynamin-type G spans 28 to 294; it reads LLELPQIAVV…LTNHIRDTLP (267 aa). Residues 38-45 form a G1 motif region; the sequence is GGQSAGKS. 38–46 lines the GTP pocket; that stretch reads GGQSAGKSS. The interval 64 to 66 is G2 motif; the sequence is VTR. The segment at 136–139 is G3 motif; the sequence is DLPG. Residues 205-208 form a G4 motif region; it reads TKLD. Residue 205 to 211 coordinates GTP; the sequence is TKLDLMD. At tyrosine 231 the chain carries Phosphotyrosine. Residues 235 to 238 form a G5 motif region; the sequence is VNRS. Residue 236-239 participates in GTP binding; sequence NRSQ. Lysine 299 carries the post-translational modification N6-acetyllysine. The 107-residue stretch at 525–631 folds into the PH domain; it reads IVIRKGWLTV…WKASLLRAGV (107 aa). Tyrosine 603 carries the phosphotyrosine modification. Lysine 604 carries the post-translational modification N6-acetyllysine. The GED domain occupies 659–750; it reads VETIRNLVDS…IIGDINTVTV (92 aa). Residues 752–869 are disordered; it reads TPAPPPVDDS…IRPLESSLLD (118 aa). Residues serine 769 and serine 773 each carry the phosphoserine modification. Residues 775 to 796 are compositionally biased toward low complexity; sequence TTQRRLTLSAPLPRPASSRGPA. Pro residues-rich tracts occupy residues 797–822 and 832–855; these read PAIPSPGPHSGAPPVPFRPGPLPPFP and PQVPSRPTRAPPSVPSRRPPPSPT. The residue at position 853 (serine 853) is a Phosphoserine.

Belongs to the TRAFAC class dynamin-like GTPase superfamily. Dynamin/Fzo/YdjA family. As to expression, isoform-specific expression in germ-cell-depleted testis (Sertoli cells), brain (peripheral sensory neurons), lung and heart.

The protein resides in the cytoplasm. Its subcellular location is the cytoskeleton. It localises to the cytoplasmic vesicle. It is found in the golgi apparatus. It catalyses the reaction GTP + H2O = GDP + phosphate + H(+). Microtubule-associated force-producing protein involved in producing microtubule bundles and able to bind and hydrolyze GTP. Most probably involved in vesicular trafficking processes, in particular endocytosis. The sequence is that of Dynamin-3 (Dnm3) from Rattus norvegicus (Rat).